A 318-amino-acid chain; its full sequence is Mitochondrial coenzyme A transporter SLC25A42 (318 aa).

3 Solcar repeats span residues 31–117 (RQVL…YKRI), 129–214 (LPPW…LKSL), and 224–312 (PYPF…MQIL). 6 consecutive transmembrane segments (helical) span residues 33 to 53 (VLSS…AVAP), 89 to 109 (LWRG…IQFS), 135 to 155 (LFAG…LDLV), 186 to 206 (LYHG…LSFF), 230 to 250 (MIFG…LDVV), and 293 to 313 (VKGP…QILL).

Belongs to the mitochondrial carrier (TC 2.A.29) family.

The protein localises to the mitochondrion inner membrane. The catalysed reaction is ADP(out) + CoA(in) = ADP(in) + CoA(out). It carries out the reaction 3'-dephospho-CoA(in) + ADP(out) = 3'-dephospho-CoA(out) + ADP(in). It catalyses the reaction adenosine 3',5'-bisphosphate(in) + ADP(out) = adenosine 3',5'-bisphosphate(out) + ADP(in). The enzyme catalyses AMP(in) + ADP(out) = AMP(out) + ADP(in). The catalysed reaction is dADP(in) + ADP(out) = dADP(out) + ADP(in). It carries out the reaction ADP(in) + ATP(out) = ADP(out) + ATP(in). Its function is as follows. Mitochondrial carrier mediating the transport of coenzyme A (CoA) in mitochondria in exchange for intramitochondrial (deoxy)adenine nucleotides and adenosine 3',5'-diphosphate. The protein is Mitochondrial coenzyme A transporter SLC25A42 (SLC25A42) of Homo sapiens (Human).